The sequence spans 144 residues: Interleukin-3 (144 aa).

A signal peptide spans 1–17 (MSSLSILHLLLLLLALH).

This sequence belongs to the IL-3 family. In terms of assembly, monomer.

It localises to the secreted. Functionally, granulocyte/macrophage colony-stimulating factors are cytokines that act in hematopoiesis by controlling the production, differentiation, and function of 2 related white cell populations of the blood, the granulocytes and the monocytes-macrophages. In terms of biological role, this CSF induces granulocytes, macrophages, mast cells, stem cells, erythroid cells, eosinophils and megakaryocytes. The chain is Interleukin-3 (IL3) from Bos taurus (Bovine).